A 183-amino-acid chain; its full sequence is Nucleoside triphosphate pyrophosphatase (183 aa).

Residue aspartate 71 is the Proton acceptor of the active site.

It belongs to the Maf family. Requires a divalent metal cation as cofactor.

It is found in the cytoplasm. It catalyses the reaction a ribonucleoside 5'-triphosphate + H2O = a ribonucleoside 5'-phosphate + diphosphate + H(+). It carries out the reaction a 2'-deoxyribonucleoside 5'-triphosphate + H2O = a 2'-deoxyribonucleoside 5'-phosphate + diphosphate + H(+). In terms of biological role, nucleoside triphosphate pyrophosphatase. May have a dual role in cell division arrest and in preventing the incorporation of modified nucleotides into cellular nucleic acids. In Campylobacter jejuni subsp. doylei (strain ATCC BAA-1458 / RM4099 / 269.97), this protein is Nucleoside triphosphate pyrophosphatase.